A 630-amino-acid chain; its full sequence is MTDTNHSSMRQHSLQSLAIAAIGVVFGDIGTSPLYSLKEAFSPAHGIPLTPSAILGVISLLFWAIILVVGIKYVLFVMRADNNGEGGVLALMALSLRPLNPKSRITGLMMALGIFGACMFYGDAVITPAISVMSAVEGLEVATPQLSHLVLPITIVILIALFWIQRHGTATVGKLFGPIMVLWFVTIAALGIYHIARAPMIVSAINPYYAFSFMSEHVLLAYVVLGSVVLVLTGAEALYADMGHFGAKPIRLAAYVLVMPSLVLNYFGQGALLLLDPKAIENPFFLLAPQWAALPLVVLSTVATVIASQAVISGAYSLTSQAIQLGYVPRMKILHTSELAIGQIYVPVVNWLLLFVILCIVIGFKSSDNLAAAYGIAVTATMVITTILAAVVMVKVWNWNKLLVAMIIGVFLVIDLGFFGANLLKVEQGGWLPLGIGALLFFLLMTWYKGRHIVKERTAADGIPLAPFLQGLLAHPPHRVSGTAIYLTGNDTLVPVSLLHNLKHNKVLHERTIFMTFVTRDIPYVKDHERVTVHDAGEGLYIVKAEYGFNETPDVKAVLEEVARQRGMTFELMDTSFFLARETVVPTHLPGMSIWRERVFAWMHQNAAKPTDFFAIPANRVVELGTKIEI.

The next 12 membrane-spanning stretches (helical) occupy residues 17–37 (LAIA…LYSL), 51–71 (PSAI…VVGI), 105–125 (ITGL…GDAV), 144–164 (PQLS…LFWI), 175–195 (LFGP…IYHI), 218–238 (VLLA…AEAL), 255–275 (YVLV…LLLL), 283–303 (PFFL…STVA), 344–364 (IYVP…VIGF), 374–394 (YGIA…VVMV), 402–422 (LLVA…FGAN), and 428–448 (QGGW…MTWY).

The protein belongs to the HAK/KUP transporter (TC 2.A.72) family.

It is found in the cell inner membrane. The enzyme catalyses K(+)(in) + H(+)(in) = K(+)(out) + H(+)(out). In terms of biological role, transport of potassium into the cell. Likely operates as a K(+):H(+) symporter. The polypeptide is Probable potassium transport system protein Kup (Burkholderia pseudomallei (strain 1710b)).